The sequence spans 297 residues: Homoserine kinase (297 aa).

82 to 92 (PVSRGLGSSAA) serves as a coordination point for ATP.

It belongs to the GHMP kinase family. Homoserine kinase subfamily.

It localises to the cytoplasm. It carries out the reaction L-homoserine + ATP = O-phospho-L-homoserine + ADP + H(+). It functions in the pathway amino-acid biosynthesis; L-threonine biosynthesis; L-threonine from L-aspartate: step 4/5. In terms of biological role, catalyzes the ATP-dependent phosphorylation of L-homoserine to L-homoserine phosphate. In Clostridium botulinum (strain 657 / Type Ba4), this protein is Homoserine kinase.